Reading from the N-terminus, the 622-residue chain is Fanconi anemia group G protein (622 aa).

S7 carries the phosphoserine modification. TPR repeat units follow at residues 246 to 279 (VQVYTALGSCHRKMGNPQRALLYLVAALKEGSAW), 344 to 377 (SQTKHILASRCLQTGRAGDAAEHYLDLLALLLDS), 453 to 486 (SATHLLQGQAWVQLGAQKVAISEFSRCLELLFRA), and 514 to 547 (AAALISRGLEWVASGQDTKALQDFLLSVQMCPGN).

As to quaternary structure, belongs to the multisubunit FA complex composed of FANCA, FANCB, FANCC, FANCE, FANCF, FANCG, FANCL/PHF9 and FANCM. The complex is not found in FA patients. In complex with FANCF, FANCA and FANCL, but not with FANCC, nor FANCE, interacts with HES1; this interaction may be essential for the stability and nuclear localization of FA core complex proteins. The complex with FANCC and FANCG may also include EIF2AK2 and HSP70. When phosphorylated at Ser-7, forms a complex with BRCA2, FANCD2 and XRCC3. Highly expressed in testis and thymus. Found in lymphoblasts.

It is found in the nucleus. It localises to the cytoplasm. Its function is as follows. DNA repair protein that may operate in a postreplication repair or a cell cycle checkpoint function. May be implicated in interstrand DNA cross-link repair and in the maintenance of normal chromosome stability. Candidate tumor suppressor gene. This is Fanconi anemia group G protein (FANCG) from Homo sapiens (Human).